A 126-amino-acid polypeptide reads, in one-letter code: Histone H2B type 2-B (126 aa).

Residues 1–12 (MPDPAKSAPAPK) are compositionally biased toward low complexity. The disordered stretch occupies residues 1–36 (MPDPAKSAPAPKKGSKKAVTKVQKKDGKKRKRSRKE). Pro-2 carries the post-translational modification N-acetylproline. At Lys-6 the chain carries N6-(2-hydroxyisobutyryl)lysine; alternate. Position 6 is an N6-(beta-hydroxybutyryl)lysine; alternate (Lys-6). Lys-6 bears the N6-acetyllysine; alternate mark. An N6-butyryllysine; alternate modification is found at Lys-6. Lys-6 is subject to N6-crotonyllysine; alternate. Lys-6 carries the N6-lactoyllysine; alternate modification. Lys-6 is covalently cross-linked (Glycyl lysine isopeptide (Lys-Gly) (interchain with G-Cter in SUMO2); alternate). ADP-ribosylserine is present on Ser-7. Position 12 is an N6-(beta-hydroxybutyryl)lysine; alternate (Lys-12). Residues Lys-12 and Lys-13 each carry the N6-acetyllysine; alternate modification. N6-crotonyllysine; alternate is present on residues Lys-12 and Lys-13. An N6-lactoyllysine; alternate modification is found at Lys-12. At Lys-13 the chain carries N6-(2-hydroxyisobutyryl)lysine; alternate. Ser-15 carries the phosphoserine; by STK4/MST1 modification. N6-acetyllysine; alternate occurs at positions 16, 17, 21, and 24. An N6-crotonyllysine; alternate mark is found at Lys-16, Lys-17, Lys-21, and Lys-24. Lys-16, Lys-17, Lys-21, and Lys-24 each carry N6-lactoyllysine; alternate. Lys-17 carries the N6-glutaryllysine; alternate modification. 2 positions are modified to N6-(2-hydroxyisobutyryl)lysine; alternate: Lys-21 and Lys-24. N6-(beta-hydroxybutyryl)lysine; alternate is present on Lys-21. Position 21 is an N6-butyryllysine; alternate (Lys-21). Lys-21 participates in a covalent cross-link: Glycyl lysine isopeptide (Lys-Gly) (interchain with G-Cter in SUMO2); alternate. Position 25 is an N6-(2-hydroxyisobutyryl)lysine (Lys-25). Lys-35 carries the N6-(2-hydroxyisobutyryl)lysine; alternate modification. Lys-35 bears the N6-(beta-hydroxybutyryl)lysine; alternate mark. Lys-35 is modified (N6-crotonyllysine; alternate). Lys-35 carries the post-translational modification N6-glutaryllysine; alternate. The residue at position 35 (Lys-35) is an N6-succinyllysine; alternate. A Glycyl lysine isopeptide (Lys-Gly) (interchain with G-Cter in ubiquitin); alternate cross-link involves residue Lys-35. Glu-36 carries the post-translational modification PolyADP-ribosyl glutamic acid. Phosphoserine; by AMPK is present on Ser-37. Lys-44, Lys-47, and Lys-58 each carry N6-(2-hydroxyisobutyryl)lysine; alternate. N6-lactoyllysine; alternate is present on Lys-44. 2 positions are modified to N6-glutaryllysine; alternate: Lys-44 and Lys-47. Residue Lys-47 is modified to N6-methyllysine; alternate. N6,N6-dimethyllysine; alternate is present on Lys-58. Arg-80 bears the Dimethylated arginine mark. Lys-86 bears the N6-(2-hydroxyisobutyryl)lysine; alternate mark. At Lys-86 the chain carries N6-acetyllysine; alternate. Position 86 is an N6-lactoyllysine; alternate (Lys-86). The residue at position 86 (Lys-86) is an N6,N6,N6-trimethyllysine; alternate. Omega-N-methylarginine is present on residues Arg-87 and Arg-93. An N6-(2-hydroxyisobutyryl)lysine; alternate modification is found at Lys-109. Lys-109 bears the N6-(beta-hydroxybutyryl)lysine; alternate mark. Lys-109 carries the post-translational modification N6-lactoyllysine; alternate. The residue at position 109 (Lys-109) is an N6-glutaryllysine; alternate. Lys-109 carries the post-translational modification N6-methyllysine; alternate. An O-linked (GlcNAc) serine glycan is attached at Ser-113. Thr-116 bears the Phosphothreonine mark. An N6-(2-hydroxyisobutyryl)lysine; alternate mark is found at Lys-117 and Lys-121. At Lys-117 the chain carries N6-(beta-hydroxybutyryl)lysine; alternate. N6-lactoyllysine; alternate is present on residues Lys-117 and Lys-121. An N6-glutaryllysine; alternate mark is found at Lys-117 and Lys-121. Lys-117 and Lys-121 each carry N6-succinyllysine; alternate. Lys-117 bears the N6-methylated lysine; alternate mark. A Glycyl lysine isopeptide (Lys-Gly) (interchain with G-Cter in ubiquitin); alternate cross-link involves residue Lys-121.

The protein belongs to the histone H2B family. In terms of assembly, the nucleosome is a histone octamer containing two molecules each of H2A, H2B, H3 and H4 assembled in one H3-H4 heterotetramer and two H2A-H2B heterodimers. The octamer wraps approximately 147 bp of DNA. Post-translationally, monoubiquitination at Lys-35 (H2BK34Ub) by the MSL1/MSL2 dimer is required for histone H3 'Lys-4' (H3K4me) and 'Lys-79' (H3K79me) methylation and transcription activation at specific gene loci, such as HOXA9 and MEIS1 loci. Similarly, monoubiquitination at Lys-121 (H2BK120Ub) by the RNF20/40 complex gives a specific tag for epigenetic transcriptional activation and is also prerequisite for histone H3 'Lys-4' and 'Lys-79' methylation. It also functions cooperatively with the FACT dimer to stimulate elongation by RNA polymerase II. H2BK120Ub also acts as a regulator of mRNA splicing: deubiquitination by USP49 is required for efficient cotranscriptional splicing of a large set of exons. Phosphorylated on Ser-15 (H2BS14ph) by STK4/MST1 during apoptosis; which facilitates apoptotic chromatin condensation. Also phosphorylated on Ser-15 in response to DNA double strand breaks (DSBs), and in correlation with somatic hypermutation and immunoglobulin class-switch recombination. Phosphorylation at Ser-37 (H2BS36ph) by AMPK in response to stress promotes transcription. In terms of processing, glcNAcylation at Ser-113 promotes monoubiquitination of Lys-121. It fluctuates in response to extracellular glucose, and associates with transcribed genes. Post-translationally, ADP-ribosylated by PARP1 or PARP2 on Ser-7 (H2BS6ADPr) in response to DNA damage. H2BS6ADPr promotes recruitment of CHD1L. Poly ADP-ribosylation on Glu-36 (H2BE35ADPr) by PARP1 regulates adipogenesis: it inhibits phosphorylation at Ser-37 (H2BS36ph), thereby blocking expression of pro-adipogenetic genes. Crotonylation (Kcr) is specifically present in male germ cells and marks testis-specific genes in post-meiotic cells, including X-linked genes that escape sex chromosome inactivation in haploid cells. Crotonylation marks active promoters and enhancers and confers resistance to transcriptional repressors. It is also associated with post-meiotically activated genes on autosomes. In terms of processing, hydroxybutyrylation of histones is induced by starvation. Post-translationally, lactylated in macrophages by EP300/P300 by using lactoyl-CoA directly derived from endogenous or exogenous lactate, leading to stimulates gene transcription.

Its subcellular location is the nucleus. The protein localises to the chromosome. In terms of biological role, core component of nucleosome. Nucleosomes wrap and compact DNA into chromatin, limiting DNA accessibility to the cellular machineries which require DNA as a template. Histones thereby play a central role in transcription regulation, DNA repair, DNA replication and chromosomal stability. DNA accessibility is regulated via a complex set of post-translational modifications of histones, also called histone code, and nucleosome remodeling. This chain is Histone H2B type 2-B, found in Mus musculus (Mouse).